We begin with the raw amino-acid sequence, 464 residues long: GTPase Der (464 aa).

EngA-type G domains are found at residues 3 to 166 and 178 to 351; these read PVIA…PEVE and IRIA…DSAF. Residues 9–16, 56–60, 118–121, 184–191, 231–235, and 296–299 each bind GTP; these read GRPNVGKS, DTGGL, NKTD, GRPNAGKS, DTAGV, and NKWD. In terms of domain architecture, KH-like spans 352–436; it reads IKVSTNHLTK…PIRLEFKTGE (85 aa).

Belongs to the TRAFAC class TrmE-Era-EngA-EngB-Septin-like GTPase superfamily. EngA (Der) GTPase family. Associates with the 50S ribosomal subunit.

Its function is as follows. GTPase that plays an essential role in the late steps of ribosome biogenesis. This is GTPase Der from Thioalkalivibrio sulfidiphilus (strain HL-EbGR7).